We begin with the raw amino-acid sequence, 541 residues long: Amino-acid permease 2 (541 aa).

The segment covering 1–22 has biased composition (polar residues); the sequence is MSFSPPNKSADATIQITEMTRQ. A disordered region spans residues 1–43; it reads MSFSPPNKSADATIQITEMTRQGTPSSGEAAASTPSTSSTESG. Residues 23–41 are compositionally biased toward low complexity; the sequence is GTPSSGEAAASTPSTSSTE. 12 helical membrane passes run 66-86, 90-110, 139-159, 188-208, 214-234, 255-275, 301-321, 347-367, 399-419, 424-444, 464-484, and 496-516; these read FSFA…WIYG, GGAA…WALA, VPFL…AGGA, VVGV…LPTA, TSGY…TLLV, GWSP…WIMT, ATTF…VCMG, PAIF…IPGI, PLIA…LGLA, IGAV…IPII, VWVN…FFFP, and YAIV…YTHG.

Belongs to the amino acid-polyamine-organocation (APC) superfamily.

The protein localises to the membrane. The polypeptide is Amino-acid permease 2 (aap-2) (Neurospora crassa (strain ATCC 24698 / 74-OR23-1A / CBS 708.71 / DSM 1257 / FGSC 987)).